We begin with the raw amino-acid sequence, 557 residues long: Protein PECTIC ARABINOGALACTAN SYNTHESIS-RELATED (557 aa).

A disordered region spans residues 1–54; it reads MAELRHSSSLGSRSSSSPLRAAGDEDSSSPHVHDHSPNGGDDEDGRPRHPSRDR. Residues 1-79 are Cytoplasmic-facing; the sequence is MAELRHSSSL…DPRVSPQKNK (79 aa). Residues 7–20 show a composition bias toward low complexity; sequence SSSLGSRSSSSPLR. A compositionally biased stretch (basic and acidic residues) spans 45 to 54; that stretch reads GRPRHPSRDR. Residues 80–100 traverse the membrane as a helical; Signal-anchor for type II membrane protein segment; it reads ISLLLILILAIASLISVYGII. Residues 101-557 are Lumenal-facing; it reads NHLNAPYLCK…NPLTPCMCKA (457 aa). Residues Asn-156, Asn-188, and Asn-324 are each glycosylated (N-linked (GlcNAc...) asparagine). 336 to 338 provides a ligand contact to substrate; sequence HLR. Residue Asn-375 is glycosylated (N-linked (GlcNAc...) asparagine).

The protein belongs to the glycosyltransferase GT106 family. As to expression, widely expressed with the highest expression in reproductive tissues and roots.

The protein localises to the golgi apparatus membrane. It functions in the pathway glycan metabolism; pectin biosynthesis. Functionally, glycosyltransferase involved in the biosynthesis of pectic type-II arabinogalactans. This Arabidopsis thaliana (Mouse-ear cress) protein is Protein PECTIC ARABINOGALACTAN SYNTHESIS-RELATED.